We begin with the raw amino-acid sequence, 186 residues long: Probable chorismate pyruvate-lyase (186 aa).

Substrate contacts are provided by Arg80, Leu118, and Glu170.

Belongs to the UbiC family.

It is found in the cytoplasm. The catalysed reaction is chorismate = 4-hydroxybenzoate + pyruvate. It functions in the pathway cofactor biosynthesis; ubiquinone biosynthesis. Removes the pyruvyl group from chorismate, with concomitant aromatization of the ring, to provide 4-hydroxybenzoate (4HB) for the ubiquinone pathway. The sequence is that of Probable chorismate pyruvate-lyase from Pseudomonas syringae pv. tomato (strain ATCC BAA-871 / DC3000).